The primary structure comprises 426 residues: DNA polymerase processivity factor component OPG148 (426 aa).

Belongs to the orthopoxvirus OPG148 family. As to quaternary structure, interacts with the DNA polymerase catalytic subunit OPG071. Interacts with UDG/OPG116. Component of the uracil-DNA glycosylase(UDG)-OPG148-polymerase complex; OPG148 and UDG form a heterodimeric processivity factor that associates with OPG071 to form the processive polymerase holoenzyme. Interacts with OPG117.

Plays an essential role in viral DNA replication by acting as the polymerase processivity factor together with protein OPG116. Serves as a bridge which links the DNA polymerase OPG071 and the uracil DNA glycosylase. The polypeptide is DNA polymerase processivity factor component OPG148 (OPG148) (Vaccinia virus (strain Copenhagen) (VACV)).